Here is a 306-residue protein sequence, read N- to C-terminus: D-alanine--D-alanine ligase B (306 aa).

Residues E15 and S150 contribute to the active site. In terms of domain architecture, ATP-grasp spans 101 to 303 (KLLWQGAGLP…FSQLVVRILE (203 aa)). 134–189 (ISALGLPVIVKPSREGSSVGMSKVVAENALQDALRLAFQHDEEVLIEKWLSGPEFT) is an ATP binding site. Positions 257, 270, and 272 each coordinate Mg(2+). The active site involves S281.

It belongs to the D-alanine--D-alanine ligase family. As to quaternary structure, monomer. It depends on Mg(2+) as a cofactor. Mn(2+) serves as cofactor.

The protein resides in the cytoplasm. It catalyses the reaction 2 D-alanine + ATP = D-alanyl-D-alanine + ADP + phosphate + H(+). It participates in cell wall biogenesis; peptidoglycan biosynthesis. Its function is as follows. Cell wall formation. The polypeptide is D-alanine--D-alanine ligase B (ddlB) (Escherichia coli O157:H7).